We begin with the raw amino-acid sequence, 100 residues long: Large ribosomal subunit protein uL23 (100 aa).

Belongs to the universal ribosomal protein uL23 family. As to quaternary structure, part of the 50S ribosomal subunit. Contacts protein L29, and trigger factor when it is bound to the ribosome.

Functionally, one of the early assembly proteins it binds 23S rRNA. One of the proteins that surrounds the polypeptide exit tunnel on the outside of the ribosome. Forms the main docking site for trigger factor binding to the ribosome. This chain is Large ribosomal subunit protein uL23, found in Prochlorococcus marinus (strain MIT 9215).